The primary structure comprises 121 residues: Small ribosomal subunit protein uS13 (121 aa).

The segment at 89 to 121 (MRHRRGLPVRGQNTKNNARTRKGKKVSIAGKKK) is disordered. Over residues 106–121 (ARTRKGKKVSIAGKKK) the composition is skewed to basic residues.

The protein belongs to the universal ribosomal protein uS13 family. Part of the 30S ribosomal subunit. Forms a loose heterodimer with protein S19. Forms two bridges to the 50S subunit in the 70S ribosome.

In terms of biological role, located at the top of the head of the 30S subunit, it contacts several helices of the 16S rRNA. In the 70S ribosome it contacts the 23S rRNA (bridge B1a) and protein L5 of the 50S subunit (bridge B1b), connecting the 2 subunits; these bridges are implicated in subunit movement. Contacts the tRNAs in the A and P-sites. The sequence is that of Small ribosomal subunit protein uS13 from Latilactobacillus sakei subsp. sakei (strain 23K) (Lactobacillus sakei subsp. sakei).